The following is a 217-amino-acid chain: Adenylate kinase (217 aa).

Residue G10–T15 coordinates ATP. The interval S30 to V59 is NMP. Residues T31, R36, E57–V59, G85–R88, and Q92 each bind AMP. The tract at residues G126–D164 is LID. Position 127 (R127) interacts with ATP. Zn(2+)-binding residues include C130 and C133. ATP is bound at residue T136–Y137. Zn(2+)-binding residues include C150 and C153. 2 residues coordinate AMP: R161 and R172. Position 200 (Q200) interacts with ATP.

This sequence belongs to the adenylate kinase family. Monomer.

The protein resides in the cytoplasm. The catalysed reaction is AMP + ATP = 2 ADP. It functions in the pathway purine metabolism; AMP biosynthesis via salvage pathway; AMP from ADP: step 1/1. Its function is as follows. Catalyzes the reversible transfer of the terminal phosphate group between ATP and AMP. Plays an important role in cellular energy homeostasis and in adenine nucleotide metabolism. The sequence is that of Adenylate kinase from Limosilactobacillus reuteri subsp. reuteri (strain JCM 1112) (Lactobacillus reuteri).